The sequence spans 455 residues: Probable glycine dehydrogenase (decarboxylating) subunit 1 (455 aa).

Belongs to the GcvP family. N-terminal subunit subfamily. The glycine cleavage system is composed of four proteins: P, T, L and H. In this organism, the P 'protein' is a heterodimer of two subunits.

The enzyme catalyses N(6)-[(R)-lipoyl]-L-lysyl-[glycine-cleavage complex H protein] + glycine + H(+) = N(6)-[(R)-S(8)-aminomethyldihydrolipoyl]-L-lysyl-[glycine-cleavage complex H protein] + CO2. The glycine cleavage system catalyzes the degradation of glycine. The P protein binds the alpha-amino group of glycine through its pyridoxal phosphate cofactor; CO(2) is released and the remaining methylamine moiety is then transferred to the lipoamide cofactor of the H protein. The protein is Probable glycine dehydrogenase (decarboxylating) subunit 1 of Francisella philomiragia subsp. philomiragia (strain ATCC 25017 / CCUG 19701 / FSC 153 / O#319-036).